The sequence spans 223 residues: Family of serine hydrolases 2 (223 aa).

Catalysis depends on charge relay system residues S110, D174, and H203.

Belongs to the AB hydrolase 3 family.

It is found in the cytoplasm. Functionally, serine hydrolase of unknown specificity. The chain is Family of serine hydrolases 2 (FSH2) from Saccharomyces cerevisiae (strain ATCC 204508 / S288c) (Baker's yeast).